The primary structure comprises 73 residues: U-scoloptoxin(15)-Sm2a (73 aa).

Residues 1–20 (MKFYIVFCLFVVLLINFAAA) form the signal peptide. 2 cysteine pairs are disulfide-bonded: Cys-39/Cys-66 and Cys-43/Cys-68.

Belongs to the scoloptoxin-15 family. In terms of tissue distribution, expressed by the venom gland.

Its subcellular location is the secreted. In terms of biological role, activity unknown, even that a lot of targets (Kv, Nav, Cav) have been tested and activities on insects and mice have been tested. The chain is U-scoloptoxin(15)-Sm2a from Scolopendra morsitans (Tanzanian blue ringleg centipede).